The following is a 214-amino-acid chain: tRNA (guanine-N(7)-)-methyltransferase (214 aa).

S-adenosyl-L-methionine is bound by residues glutamate 44, glutamate 69, aspartate 96, and aspartate 118. Aspartate 118 is an active-site residue. Substrate is bound at residue lysine 122. The segment at 124–129 (RHEKRR) is interaction with RNA. Substrate-binding positions include aspartate 154 and 192–195 (TEYE).

Belongs to the class I-like SAM-binding methyltransferase superfamily. TrmB family.

The catalysed reaction is guanosine(46) in tRNA + S-adenosyl-L-methionine = N(7)-methylguanosine(46) in tRNA + S-adenosyl-L-homocysteine. It functions in the pathway tRNA modification; N(7)-methylguanine-tRNA biosynthesis. Functionally, catalyzes the formation of N(7)-methylguanine at position 46 (m7G46) in tRNA. This Lacticaseibacillus casei (strain BL23) (Lactobacillus casei) protein is tRNA (guanine-N(7)-)-methyltransferase.